Consider the following 189-residue polypeptide: Nucleolar protein 16 (189 aa).

Over residues 1–33 (MARDVKKRGKPAYTNRRNRQKYLKKKDNKKKLS) the composition is skewed to basic residues. Residues 1–34 (MARDVKKRGKPAYTNRRNRQKYLKKKDNKKKLSK) form a disordered region.

It belongs to the NOP16 family.

The protein resides in the nucleus. Its subcellular location is the nucleolus. This is Nucleolar protein 16 from Caenorhabditis elegans.